Here is a 283-residue protein sequence, read N- to C-terminus: Small ribosomal subunit protein uS3 (283 aa).

A KH type-2 domain is found at 39 to 107 (VRAYLKTKLK…PVHVNIEEIR (69 aa)). The interval 219 to 283 (ASDDDKKRRG…AAVSAEKAGE (65 aa)) is disordered. Residues 221–236 (DDDKKRRGPRRDDGKP) show a composition bias toward basic and acidic residues. Residues 237-260 (SGRPRAPRPEGQPGAAAPGSAPAA) show a composition bias toward low complexity.

It belongs to the universal ribosomal protein uS3 family. As to quaternary structure, part of the 30S ribosomal subunit. Forms a tight complex with proteins S10 and S14.

In terms of biological role, binds the lower part of the 30S subunit head. Binds mRNA in the 70S ribosome, positioning it for translation. In Janthinobacterium sp. (strain Marseille) (Minibacterium massiliensis), this protein is Small ribosomal subunit protein uS3.